A 245-amino-acid polypeptide reads, in one-letter code: MRLLLTNDDGIMAEGIQVLAKHFEKDNEVIIAAPDVQRSGSGHCITTVPGELIIQEVKLEGINSKAYSITGTPADCARLGVRKLGNNQIDMVISGINNGFNLGIDSLYSGTVSAAIEAAICETPSIAVSLDTKGGNYDYNIAAEYALEVFSIYKDKYKNKDENVVLSLNVPCLPREKIKGLKVCRVGFKYHLQEIYDKGEKTEELSYNYTDIYYVKRGYAALSPLHYDLTNYKILGDINNLFTEK.

Residues D8, D9, S39, and N97 each contribute to the a divalent metal cation site.

This sequence belongs to the SurE nucleotidase family. A divalent metal cation is required as a cofactor.

It localises to the cytoplasm. It catalyses the reaction a ribonucleoside 5'-phosphate + H2O = a ribonucleoside + phosphate. Nucleotidase that shows phosphatase activity on nucleoside 5'-monophosphates. The sequence is that of 5'-nucleotidase SurE from Clostridium kluyveri (strain NBRC 12016).